Here is a 981-residue protein sequence, read N- to C-terminus: Isoleucine--tRNA ligase (981 aa).

The 'HIGH' region signature appears at 50–60; sequence PTTNGMPHVGH. Residues 604–608 carry the 'KMSKS' region motif; the sequence is KMSKS. An ATP-binding site is contributed by Lys-607.

It belongs to the class-I aminoacyl-tRNA synthetase family. IleS type 2 subfamily. Monomer. Requires Zn(2+) as cofactor.

The protein resides in the cytoplasm. It catalyses the reaction tRNA(Ile) + L-isoleucine + ATP = L-isoleucyl-tRNA(Ile) + AMP + diphosphate. Its function is as follows. Catalyzes the attachment of isoleucine to tRNA(Ile). As IleRS can inadvertently accommodate and process structurally similar amino acids such as valine, to avoid such errors it has two additional distinct tRNA(Ile)-dependent editing activities. One activity is designated as 'pretransfer' editing and involves the hydrolysis of activated Val-AMP. The other activity is designated 'posttransfer' editing and involves deacylation of mischarged Val-tRNA(Ile). This is Isoleucine--tRNA ligase from Pyrobaculum aerophilum (strain ATCC 51768 / DSM 7523 / JCM 9630 / CIP 104966 / NBRC 100827 / IM2).